A 201-amino-acid polypeptide reads, in one-letter code: Retinol-binding protein 4 (201 aa).

Positions 1 to 18 are cleaved as a signal peptide; sequence MEWVWALVLLAALGSAQA. 3 disulfides stabilise this stretch: Cys22–Cys178, Cys88–Cys192, and Cys138–Cys147. Gln116 contacts substrate. Arg139 carries the omega-N-methylarginine modification.

Belongs to the calycin superfamily. Lipocalin family. As to quaternary structure, interacts with TTR. Interaction with TTR prevents its loss by filtration through the kidney glomeruli. Interacts with STRA6.

It is found in the secreted. Its function is as follows. Retinol-binding protein that mediates retinol transport in blood plasma. Delivers retinol from the liver stores to the peripheral tissues. Transfers the bound all-trans retinol to STRA6, that then facilitates retinol transport across the cell membrane. This chain is Retinol-binding protein 4 (RBP4), found in Sus scrofa (Pig).